We begin with the raw amino-acid sequence, 309 residues long: Homoserine O-succinyltransferase (309 aa).

The Acyl-thioester intermediate role is filled by Cys142. Residues Lys163 and Ser192 each contribute to the substrate site. His235 functions as the Proton acceptor in the catalytic mechanism. The active site involves Glu237. A substrate-binding site is contributed by Arg249.

Belongs to the MetA family. As to quaternary structure, homodimer.

It localises to the cytoplasm. It carries out the reaction L-homoserine + succinyl-CoA = O-succinyl-L-homoserine + CoA. Its pathway is amino-acid biosynthesis; L-methionine biosynthesis via de novo pathway; O-succinyl-L-homoserine from L-homoserine: step 1/1. Its function is as follows. Transfers a succinyl group from succinyl-CoA to L-homoserine, forming succinyl-L-homoserine. The polypeptide is Homoserine O-succinyltransferase (Salmonella arizonae (strain ATCC BAA-731 / CDC346-86 / RSK2980)).